Reading from the N-terminus, the 708-residue chain is Leukotoxin translocation ATP-binding protein LktB (708 aa).

A Peptidase C39 domain is found at 1–126 (MEANHQRNDL…ACYQGQLILV (126 aa)). An ABC transmembrane type-1 domain is found at 155–437 (FLETLIVSIF…LAQLWQDFQQ (283 aa)). The next 5 membrane-spanning stretches (helical) occupy residues 159 to 179 (LIVS…FQVV), 192 to 212 (LNII…LSGL), 270 to 290 (ALTS…MWYY), 296 to 316 (LVIL…SPIL), and 389 to 409 (VMVI…LSIG). One can recognise an ABC transporter domain in the interval 469-704 (ISFKNIRFRY…SNGLYSYLHQ (236 aa)). 503 to 510 (GRSGSGKS) serves as a coordination point for ATP.

The protein belongs to the ABC transporter superfamily. Protein-1 exporter (TC 3.A.1.109) family. As to quaternary structure, homodimer.

The protein resides in the cell inner membrane. The enzyme catalyses ATP + H2O + proteinSide 1 = ADP + phosphate + proteinSide 2.. Functionally, part of the ABC transporter complex LktBD involved in leukotoxin export. Transmembrane domains (TMD) form a pore in the inner membrane and the ATP-binding domain (NBD) is responsible for energy generation. In Bibersteinia trehalosi (Pasteurella trehalosi), this protein is Leukotoxin translocation ATP-binding protein LktB (lktB).